Here is a 58-residue protein sequence, read N- to C-terminus: MLFIDAMPIKTKELVRKTRHERIGISKLIKKTVVLVTIHRKNVGILDIKQLSLPMGSI.

This is an uncharacterized protein from Methanocaldococcus jannaschii (strain ATCC 43067 / DSM 2661 / JAL-1 / JCM 10045 / NBRC 100440) (Methanococcus jannaschii).